A 772-amino-acid chain; its full sequence is Semaphorin-3A (772 aa).

A signal peptide spans 1-22 (MGWLRGIALLSLGVLLAGRVNC). Residues 31-514 (RLKLSYKEML…SATGVSQLPL (484 aa)) enclose the Sema domain. An N-linked (GlcNAc...) asparagine glycan is attached at Asn-53. Cys-103 and Cys-114 form a disulfide bridge. N-linked (GlcNAc...) asparagine glycosylation is present at Asn-125. 4 disulfides stabilise this stretch: Cys-132–Cys-141, Cys-269–Cys-381, Cys-293–Cys-341, and Cys-517–Cys-535. The Ig-like C2-type domain occupies 576 to 665 (PSGQTLEEKI…GFIQTLLKVT (90 aa)). The N-linked (GlcNAc...) asparagine glycan is linked to Asn-591. Residues Cys-650 and Cys-723 are joined by a disulfide bond. Residues 730–772 (DRKQRRQRPANAQVNTNKWKHLQENKKGRNRRTHEFERAPRSV) form a disordered region. Residues 750 to 772 (HLQENKKGRNRRTHEFERAPRSV) show a composition bias toward basic and acidic residues.

Belongs to the semaphorin family. As to expression, expressed at relatively high levels in brain and muscle, moderate levels in lung, bursa, and heart and virtually absent in liver. Collapsin-1, -2, -3, and -5 bind to overlapping but distinct axon tracts.

It localises to the secreted. Its function is as follows. Induces the collapse and paralysis of neuronal growth cones. Could serve as a ligand that guides specific growth cones by a motility-inhibiting mechanism. Binds to neuropilin. This chain is Semaphorin-3A (SEMA3A), found in Gallus gallus (Chicken).